We begin with the raw amino-acid sequence, 164 residues long: CASP-like protein 1C1 (164 aa).

Residues 1-7 (MVKLTKR) lie on the Cytoplasmic side of the membrane. The chain crosses the membrane as a helical span at residues 8–28 (IGGLVLRLAAFGAALAALIVM). Over 29–51 (ITSRERASFLAISLEAKYTDMAA) the chain is Extracellular. Residues 52-72 (FKYFVIANAVVSVYSFLVLFL) traverse the membrane as a helical segment. At 73–80 (PKESLLWK) the chain is on the cytoplasmic side. The helical transmembrane segment at 81–101 (FVVVLDLVMTMLLTSSLSAAL) threads the bilayer. The Extracellular segment spans residues 102–129 (AVAQVGKKGNANAGWLPICGQVPKFCDQ). Residues 130-150 (ITGALIAGFVALVLYVLLLLY) form a helical membrane-spanning segment. Residues 151-164 (SLHAVVDPFLLQKS) are Cytoplasmic-facing.

It belongs to the Casparian strip membrane proteins (CASP) family. As to quaternary structure, homodimer and heterodimers. As to expression, expressed in the stele of the root.

It localises to the cell membrane. The protein is CASP-like protein 1C1 of Arabidopsis thaliana (Mouse-ear cress).